Consider the following 284-residue polypeptide: Putative ABC transporter ATP-binding protein sll0385 (284 aa).

Positions 51–278 constitute an ABC transporter domain; it reads IRVRELSFAY…QTLMESHGLE (228 aa). 84–91 serves as a coordination point for ATP; the sequence is GHNGCGKT.

It belongs to the ABC transporter superfamily.

The protein resides in the cell inner membrane. Its function is as follows. Probably part of an ABC transporter complex. Responsible for energy coupling to the transport system. This Synechocystis sp. (strain ATCC 27184 / PCC 6803 / Kazusa) protein is Putative ABC transporter ATP-binding protein sll0385.